Here is a 723-residue protein sequence, read N- to C-terminus: Nicastrin (723 aa).

Residues 1–16 form the signal peptide; that stretch reads MKKWLVIVLIIAGIRC. Topologically, residues 17-678 are extracellular; the sequence is DGFSDQVFRT…ESVNLYLMED (662 aa). 6 N-linked (GlcNAc...) asparagine glycosylation sites follow: Asn-40, Asn-181, Asn-271, Asn-328, Asn-409, and Asn-627. A helical transmembrane segment spans residues 679–699; that stretch reads ASFEYTMILIAVISALLSIFA. Over 700–723 the chain is Cytoplasmic; the sequence is VGRCSETTFIVDEGEPAAEGGEPL.

Belongs to the nicastrin family. Component of the gamma-secretase complex, a complex probably composed of the presenilin homodimer (sel-12, hop-1 or spe-4), nicastrin (aph-2), aph-1 and pen-2.

The protein localises to the membrane. In terms of biological role, essential subunit of the gamma-secretase complex, an endoprotease complex that catalyzes the intramembrane cleavage of integral membrane proteins such as Notch (glp-1 or lin-12). It may represents a stabilizing cofactor required for the assembly of the gamma-secretase complex. The protein is Nicastrin (aph-2) of Caenorhabditis elegans.